A 331-amino-acid polypeptide reads, in one-letter code: Glycerophosphodiester phosphodiesterase 1 (331 aa).

Over 1-2 (MW) the chain is Cytoplasmic. Residues 3–23 (LWEEQGGLMGPFSFLLLVLLL) form a helical membrane-spanning segment. Residues 24-254 (LTRSPFNACL…WKQSMFVALD (231 aa)) are Lumenal-facing. In terms of domain architecture, GP-PDE spans 65–331 (VSAIAHRGGS…SMLEDCTPEF (267 aa)). Glu-97 and Asp-99 together coordinate Mg(2+). A glycan (N-linked (GlcNAc...) asparagine) is linked at Asn-168. Mg(2+) is bound at residue Asp-174. Asn-198 is a glycosylation site (N-linked (GlcNAc...) asparagine). Residues 255 to 275 (ILLDWSMHNILWYLCGVSAFL) form a helical membrane-spanning segment. The Cytoplasmic portion of the chain corresponds to 276–331 (AQKDFISPDYVKKWSAKGIQVVAWTVNTFDEKSYYESHLGSSYITDSMLEDCTPEF).

This sequence belongs to the glycerophosphoryl diester phosphodiesterase family. In terms of assembly, interacts with PRAF2. Interacts with RGS16. The cofactor is Mg(2+). N-glycosylated.

It is found in the cell membrane. It localises to the cytoplasmic vesicle membrane. It catalyses the reaction sn-glycero-3-phospho-1D-myo-inositol + H2O = myo-inositol + sn-glycerol 3-phosphate + H(+). The enzyme catalyses 1-O-(1Z-octadecenyl)-sn-glycero-3-phospho-(N-5Z,8Z,11Z,14Z-eicosatetraenoyl)-ethanolamine + H2O = 1-O-(1Z-octadecenyl)-sn-glycero-3-phosphate + N-(5Z,8Z,11Z,14Z-eicosatetraenoyl)-ethanolamine + H(+). The catalysed reaction is 1-O-(1Z-octadecenyl)-sn-glycero-3-phospho-(N-9Z-octadecenoyl)-ethanolamine + H2O = 1-O-(1Z-octadecenyl)-sn-glycero-3-phosphate + N-(9Z-octadecenoyl) ethanolamine + H(+). It carries out the reaction 1-O-(1Z-octadecenyl)-sn-glycero-3-phospho-N-hexadecanoyl-ethanolamine + H2O = 1-O-(1Z-octadecenyl)-sn-glycero-3-phosphate + N-hexadecanoylethanolamine + H(+). It catalyses the reaction N-(4Z,7Z,10Z,13Z,16Z,19Z)-docosahexaenoyl-sn-glycero-3-phosphoethanolamine + H2O = N-(4Z,7Z,10Z,13Z,16Z,19Z)-docosahexaenoyl ethanolamine + sn-glycerol 3-phosphate + H(+). The enzyme catalyses N-eicosanoyl-sn-glycero-3-phosphoethanolamine + H2O = N-eicosanoyl ethanolamine + sn-glycerol 3-phosphate + H(+). The catalysed reaction is N-hexadecanoyl-sn-glycero-3-phosphoethanolamine + H2O = N-hexadecanoylethanolamine + sn-glycerol 3-phosphate + H(+). It carries out the reaction N-(9Z-octadecenoyl)-sn-glycero-3-phosphoethanolamine + H2O = N-(9Z-octadecenoyl) ethanolamine + sn-glycerol 3-phosphate + H(+). It catalyses the reaction N-(5Z,8Z,11Z,14Z-eicosatetraenoyl)-sn-glycero-3-phosphoethanolamine + H2O = N-(5Z,8Z,11Z,14Z-eicosatetraenoyl)-ethanolamine + sn-glycerol 3-phosphate + H(+). Its activity is regulated as follows. Inhibited by EDTA, calcium chloride, and zinc chloride. Enhanced by magnesium chloride. Glycerophosphodiester phosphodiesterase activity can be modulated by G-protein signaling pathways. Its function is as follows. Hydrolyzes the phosphodiester bond of glycerophosphodiesters such as glycerophosphoinositol (GroPIns) and glycerophosphoethanolamine (GroPEth), to yield a glycerol phosphate and an alcohol. Hydrolyzes glycerophospho-N-acylethanolamines to N-acylethanolamines in the brain and participates in bioactive N-acylethanolamine biosynthesis such as anandamide (an endocannabinoid), N-palmitoylethanolamine (an anti-inflammatory), and N-oleoylethanolamine (an anorexic). In addition, has a lysophospholipase D activity by hydrolyzing N-acyl-lysoplasmenylethanolamine (N-acyl-lysoPlsEt) to N-acylethanolamine. However lysophospholipase D activity is lower than glycerophosphodiester phosphodiesterase activity. Has little or no activity towards glycerophosphocholine. This is Glycerophosphodiester phosphodiesterase 1 from Bos taurus (Bovine).